The following is a 778-amino-acid chain: Actin-binding LIM protein 1 (778 aa).

LIM zinc-binding domains are found at residues 97 to 156 (IHCH…MYGT), 156 to 216 (TRCH…MSSS), 224 to 283 (SNCA…LFGV), and 283 to 343 (VKCE…TKTE). A Phosphoserine modification is found at serine 216. The disordered stretch occupies residues 339 to 370 (STKTEEKLRPTRTSSESIYSRPGSSIPGSPGH). Residues 360-369 (PGSSIPGSPG) show a composition bias toward low complexity. The residue at position 367 (serine 367) is a Phosphoserine. Phosphotyrosine occurs at positions 373 and 396. Disordered stretches follow at residues 414–510 (YDDK…QAPK) and 552–597 (AAQA…EELL). Phosphoserine is present on residues serine 422, serine 426, and serine 431. Residues 423–434 (LGESPRTLSPTP) are compositionally biased toward polar residues. The residue at position 433 (threonine 433) is a Phosphothreonine. Serine 435 bears the Phosphoserine mark. Residue tyrosine 439 is modified to Phosphotyrosine. The segment covering 449-474 (RSTSQGSINSPVYSRHSYTPTTSRSP) has biased composition (polar residues). Phosphoserine occurs at positions 452, 455, 458, 498, and 587. Residues 590-614 (EEDDEELLRRRQLQEEQLMKLNSGL) adopt a coiled-coil conformation. A Glycyl lysine isopeptide (Lys-Gly) (interchain with G-Cter in SUMO2) cross-link involves residue lysine 620. Phosphoserine occurs at positions 640, 655, 677, and 706. The HP domain occupies 710–778 (MLEPKIFPYE…NDMKKKAKLF (69 aa)).

Binds F-actin. Interacts with ABRA. Detected in liver, heart, skeletal muscle, brain and retina, where it is concentrated in the inner segment and in the outer plexiform layers.

Its subcellular location is the cytoplasm. It localises to the cytoskeleton. In terms of biological role, may act as scaffold protein. May play a role in the development of the retina. Has been suggested to play a role in axon guidance. The protein is Actin-binding LIM protein 1 (ABLIM1) of Homo sapiens (Human).